Reading from the N-terminus, the 261-residue chain is 3-methyl-2-oxobutanoate hydroxymethyltransferase (261 aa).

Residues Asp-47 and Asp-86 each contribute to the Mg(2+) site. 3-methyl-2-oxobutanoate-binding positions include 47 to 48, Asp-86, and Lys-116; that span reads DS. Residue Glu-118 participates in Mg(2+) binding. The Proton acceptor role is filled by Glu-186.

This sequence belongs to the PanB family. In terms of assembly, homodecamer; pentamer of dimers. Mg(2+) is required as a cofactor.

The protein resides in the cytoplasm. It catalyses the reaction 3-methyl-2-oxobutanoate + (6R)-5,10-methylene-5,6,7,8-tetrahydrofolate + H2O = 2-dehydropantoate + (6S)-5,6,7,8-tetrahydrofolate. The protein operates within cofactor biosynthesis; (R)-pantothenate biosynthesis; (R)-pantoate from 3-methyl-2-oxobutanoate: step 1/2. Catalyzes the reversible reaction in which hydroxymethyl group from 5,10-methylenetetrahydrofolate is transferred onto alpha-ketoisovalerate to form ketopantoate. The protein is 3-methyl-2-oxobutanoate hydroxymethyltransferase of Thermosynechococcus vestitus (strain NIES-2133 / IAM M-273 / BP-1).